Reading from the N-terminus, the 224-residue chain is Transcriptional regulatory protein DltR (224 aa).

Residues 2–116 form the Response regulatory domain; sequence RLLVVEDEKS…ELLARIRLRT (115 aa). Residue aspartate 51 is modified to 4-aspartylphosphate. Residues 124–222 constitute a DNA-binding region (ompR/PhoB-type); it reads ANQLRLGNIR…TKGFGYSLEE (99 aa).

Phosphorylated by DltS.

It is found in the cytoplasm. Its function is as follows. Member of the two-component regulatory system DltS/DltR. Regulates the expression of the dlt operon. The chain is Transcriptional regulatory protein DltR (dltR) from Streptococcus agalactiae serotype III (strain NEM316).